Reading from the N-terminus, the 301-residue chain is Probable alpha-L-glutamate ligase (301 aa).

An ATP-grasp domain is found at 104–287 (LQLMSRKGLG…VASMIIKHIE (184 aa)). ATP contacts are provided by residues Lys-141, 178 to 179 (EY), Asp-187, and 211 to 213 (RSN). 3 residues coordinate Mg(2+): Asp-248, Glu-260, and Asn-262. Asp-248, Glu-260, and Asn-262 together coordinate Mn(2+).

This sequence belongs to the RimK family. Mg(2+) is required as a cofactor. The cofactor is Mn(2+).

This is Probable alpha-L-glutamate ligase from Marinomonas sp. (strain MWYL1).